We begin with the raw amino-acid sequence, 167 residues long: Outer envelope pore protein 21A, chloroplastic (167 aa).

The Cytoplasmic segment spans residues 1–21 (METSLRYATNSRSLKIHAKEK). A beta stranded membrane pass occupies residues 22 to 31 (FPVNSKTRLQ). Residues 32–55 (LHGELDTGAGVPSYFCAMIRYFFH) lie on the Chloroplast intermembrane side of the membrane. A beta stranded membrane pass occupies residues 56–65 (EASTNLGVGL). The Cytoplasmic segment spans residues 66–71 (HYDKRE). The chain crosses the membrane as a beta stranded span at residues 72 to 81 (KLRCLVRGKK). Over 82 to 87 (KFPVIT) the chain is Chloroplast intermembrane. A beta stranded transmembrane segment spans residues 88 to 97 (DEVVTFNIKG). The Cytoplasmic segment spans residues 98–110 (RCDFDQDLVQRNA). The beta stranded transmembrane segment at 111-120 (KGAAEFDWNI) threads the bilayer. Over 121–127 (WKFQKDQ) the chain is Chloroplast intermembrane. Residues 128–137 (DLRLRIGYEM) traverse the membrane as a beta stranded segment. Residues 138–142 (FEKVP) lie on the Cytoplasmic side of the membrane. A beta stranded membrane pass occupies residues 143–152 (YMQIRENNWT). The Chloroplast intermembrane segment spans residues 153–158 (FNTNLK). A beta stranded transmembrane segment spans residues 159–167 (GKWNVRYDL).

Belongs to the plastid outer envelope porin OEP21 (TC 1.B.29) family.

The protein localises to the plastid. It localises to the etioplast membrane. The protein resides in the chloroplast outer membrane. Its function is as follows. Voltage-dependent rectifying anion channel that facilitates the translocation between chloroplast and cytoplasm of phosphorylated carbohydrates such as triosephosphate, 3-phosphoglycerate and inorganic phosphate (Pi) depending of ATP to triosephosphate ratio in the plastidial intermembrane space; in high triosephosphate/ATP conditions (e.g. photosynthesis), export of triosphosphate from chloroplast (outward rectifying channels), but in high ATP/triosephosphate conditions (e.g. dark phase), import of phosphosolutes (inward rectifying channels). In Arabidopsis thaliana (Mouse-ear cress), this protein is Outer envelope pore protein 21A, chloroplastic (OEP21A).